Here is a 253-residue protein sequence, read N- to C-terminus: MKLNVSFPATGCQKLFEVVDEHKLRIFYEKRMGAEVEADQLGDEWKGYVLRIAGGNDKQGFPMKQGVLTNSRVRLLMSKGHSCYRPRRDGERKRKSVRGCIVDANLSVLALVIVRKGEQEIPGLTDGNVPRRLGPKRASKIRKLFNLSKEDDVRRYVVKRLLPAKEGKENAKPRYKAPKIQRLVTPVVLQRRRHRLALKKKRLAKRKQSENDYAKLLAQRKKESKVRRQEELKRRRSASMRDSKSSDKSAPQK.

The segment at K200 to K253 is disordered. The segment covering V226–D247 has biased composition (basic and acidic residues).

It belongs to the eukaryotic ribosomal protein eS6 family. In terms of assembly, component of the small ribosomal subunit. Part of the small subunit (SSU) processome, composed of more than 70 proteins and the RNA chaperone small nucleolar RNA (snoRNA) U3. In terms of processing, ribosomal protein S6 is the major substrate of protein kinases in eukaryote ribosomes.

The protein resides in the cytoplasm. The protein localises to the nucleus. It is found in the nucleolus. Component of the 40S small ribosomal subunit. Plays an important role in controlling cell growth and proliferation through the selective translation of particular classes of mRNA. Part of the small subunit (SSU) processome, first precursor of the small eukaryotic ribosomal subunit. During the assembly of the SSU processome in the nucleolus, many ribosome biogenesis factors, an RNA chaperone and ribosomal proteins associate with the nascent pre-rRNA and work in concert to generate RNA folding, modifications, rearrangements and cleavage as well as targeted degradation of pre-ribosomal RNA by the RNA exosome. The sequence is that of Small ribosomal subunit protein eS6 (RpS6) from Spodoptera frugiperda (Fall armyworm).